The chain runs to 618 residues: Nuclear RNA export factor 1 (618 aa).

Basic and acidic residues predominate over residues M1–V15. Positions M1–G113 are disordered. The residue at position 2 (A2) is an N-acetylalanine. The interval A2 to A59 is minor non-specific RNA-binding. An RNA-binding (RBD) region spans residues A2 to N117. The interaction with ALYREF/THOC4 and LUZP4 stretch occupies residues A2 to Y197. A compositionally biased stretch (basic residues) spans Q19–F28. R41 carries the post-translational modification Asymmetric dimethylarginine; alternate. R41 is subject to Omega-N-methylarginine; alternate. Residues M60–N117 are major non-specific RNA-binding. The segment at M60 to N117 is RNA binding. Residues G66–R99 carry the Nuclear localization signal motif. Basic and acidic residues predominate over residues R80–A102. The Nuclear export signal motif lies at G82–T109. Positions W118–Y197 constitute an RRM domain. A 3'-nitrotyrosine modification is found at Y125. LRR repeat units lie at residues E265–P290, N291–L314, K315–E342, and R343–P370. Positions L385–V535 constitute an NTF2 domain. The region spanning P564–K618 is the TAP-C domain.

This sequence belongs to the NXF family. Heterodimer (via NTF2 domain) with NXT1. The formation of NXF1-NXT1 heterodimers is required for the NXF1-mediated nuclear mRNA export. Forms a complex with RANBP2/NUP358, NXT1 and RANGAP1. Associates with the exon junction complex (EJC). Associates with the transcription/export (TREX) complex. Found in a mRNA complex with UPF3A and UPF3B. Found in a post-splicing complex with RBM8A, UPF1, UPF2, UPF3A, UPF3B and RNPS1. Interacts (via N-terminus) with DHX9 (via N-terminus); this interaction is direct and negatively regulates NXF1-mediated nuclear export of constitutive transport element (CTE)-containing cellular mRNAs. Interacts with FYTTD1/UIF. Interacts with EIF4A3. Interacts with NUP42. Interacts with ALYREF/THOC4. Interacts with CHTOP. Interacts with FRG1 (via N-terminus). Interacts with LUZP4. Interacts with FMR1; the interaction occurs in a mRNA-dependent and polyribosomes-independent manner in the nucleus. Interacts with CPSF6 (via N-terminus); this interaction is direct. Interacts with RBM15. Interacts with RBM15B. Interacts with MCM3AP; this interaction is not mediated by RNA. Interacts with DDX3X (via C-terminus); this interaction may be partly involved in DDX3X nuclear export and in NXF1 localization to stress granules. Interacts with PABPC1/PABP1. Expressed ubiquitously.

The protein resides in the nucleus. Its subcellular location is the nucleoplasm. The protein localises to the nucleus speckle. It localises to the cytoplasm. It is found in the nuclear pore complex. The protein resides in the nucleus envelope. Its subcellular location is the stress granule. Its function is as follows. Involved in the nuclear export of mRNA species bearing retroviral constitutive transport elements (CTE) and in the export of mRNA from the nucleus to the cytoplasm (TAP/NFX1 pathway). The NXF1-NXT1 heterodimer is involved in the export of HSP70 mRNA in conjunction with ALYREF/THOC4 and THOC5 components of the TREX complex. ALYREF/THOC4-bound mRNA is thought to be transferred to the NXF1-NXT1 heterodimer for export. Also involved in nuclear export of m6A-containing mRNAs: interaction between SRSF3 and YTHDC1 facilitates m6A-containing mRNA-binding to both SRSF3 and NXF1, promoting mRNA nuclear export. This chain is Nuclear RNA export factor 1 (Nxf1), found in Mus musculus (Mouse).